Here is a 462-residue protein sequence, read N- to C-terminus: Proteases secretion protein PrtF (462 aa).

The signal sequence occupies residues 1–23 (MRRKAVLLTVVLSLSGGSAQAMG).

This sequence belongs to the outer membrane factor (OMF) (TC 1.B.17) family.

The protein localises to the cell outer membrane. Functionally, involved in the secretion of proteases A, B, C and G. The chain is Proteases secretion protein PrtF (prtF) from Dickeya chrysanthemi (Pectobacterium chrysanthemi).